The following is a 177-amino-acid chain: Adenine phosphoribosyltransferase (177 aa).

The protein belongs to the purine/pyrimidine phosphoribosyltransferase family. In terms of assembly, homodimer.

The protein resides in the cytoplasm. The enzyme catalyses AMP + diphosphate = 5-phospho-alpha-D-ribose 1-diphosphate + adenine. It participates in purine metabolism; AMP biosynthesis via salvage pathway; AMP from adenine: step 1/1. Catalyzes a salvage reaction resulting in the formation of AMP, that is energically less costly than de novo synthesis. This is Adenine phosphoribosyltransferase from Leuconostoc citreum (strain KM20).